Reading from the N-terminus, the 312-residue chain is Dihydroorotate dehydrogenase B (NAD(+)), catalytic subunit (312 aa).

Residues S23 and 47-48 (KA) contribute to the FMN site. Residues K47 and 71–75 (NAIGL) contribute to the substrate site. The FMN site is built by N103 and N131. N131 is a binding site for substrate. Residue C134 is the Nucleophile of the active site. 2 residues coordinate FMN: K171 and I197. 198–199 (NT) serves as a coordination point for substrate. Residues G223, 249–250 (GG), and 271–272 (GT) contribute to the FMN site.

Belongs to the dihydroorotate dehydrogenase family. Type 1 subfamily. In terms of assembly, heterotetramer of 2 PyrK and 2 PyrD type B subunits. Requires FMN as cofactor.

It localises to the cytoplasm. It catalyses the reaction (S)-dihydroorotate + NAD(+) = orotate + NADH + H(+). Its pathway is pyrimidine metabolism; UMP biosynthesis via de novo pathway; orotate from (S)-dihydroorotate (NAD(+) route): step 1/1. Catalyzes the conversion of dihydroorotate to orotate with NAD(+) as electron acceptor. The protein is Dihydroorotate dehydrogenase B (NAD(+)), catalytic subunit (pyrDB) of Streptococcus pneumoniae (strain ATCC BAA-255 / R6).